The primary structure comprises 327 residues: MQHLQEIIANANAAIDAAQSLVALDEVRVQYLGKKGELTAQLQSLGKLPPEERREAGQEINKAKEVVQHALAARKDALQRAELEAKLASETIDVTLPGRRIENGGLHPVTRTVERIEQFFGELGFNVESGPEIEDAFHNFDALNIAADHPARTDHDTFFFNPDLMLRTHTSGVQIRTMENGKPPFRFIAPGRVYRNDYDQTHTPMFHQVEGMLVDENVNFAQLKGILHDFLCNFFEEEVEVRFRPSYFPFTEPSAEVDVKGKNGKWLEVLGCGMVHPNVLRSVGIDPEKYSGFAFGMGVERLTMLRYGVNDLRAFFENDLRFLKQFK.

Residue Glu-252 participates in Mg(2+) binding.

It belongs to the class-II aminoacyl-tRNA synthetase family. Phe-tRNA synthetase alpha subunit type 1 subfamily. Tetramer of two alpha and two beta subunits. Requires Mg(2+) as cofactor.

Its subcellular location is the cytoplasm. The catalysed reaction is tRNA(Phe) + L-phenylalanine + ATP = L-phenylalanyl-tRNA(Phe) + AMP + diphosphate + H(+). The chain is Phenylalanine--tRNA ligase alpha subunit from Vibrio vulnificus (strain CMCP6).